The sequence spans 1188 residues: DNA-directed RNA polymerase subunit beta (1188 aa).

It belongs to the RNA polymerase beta chain family. As to quaternary structure, the RNAP catalytic core consists of 2 alpha, 1 beta, 1 beta' and 1 omega subunit. When a sigma factor is associated with the core the holoenzyme is formed, which can initiate transcription.

The catalysed reaction is RNA(n) + a ribonucleoside 5'-triphosphate = RNA(n+1) + diphosphate. Its function is as follows. DNA-dependent RNA polymerase catalyzes the transcription of DNA into RNA using the four ribonucleoside triphosphates as substrates. This is DNA-directed RNA polymerase subunit beta from Streptococcus equi subsp. equi (strain 4047).